The following is a 27-amino-acid chain: Dermaseptin-S4 (27 aa).

It belongs to the frog skin active peptide (FSAP) family. Dermaseptin subfamily. Monomer and oligomer. Forms aggregates in aqueous environments. As to expression, expressed by the skin glands.

The protein localises to the secreted. In terms of biological role, potent antimicrobial peptide with activity against bacteria and protozoa. Also has activity against fungi. Also shows activity against enveloped herpes simplex virus type 1. Probably acts by disturbing membrane functions with its amphipathic structure. Binds to healthy erythrocytes (this binding is receptor independent), and has strong hemolytic activity. Does not bind to P.falciparum infected erythrocytes, but accumulates within the parasite. Kills the parasite, and only at high concentrations has a hemolytic activity on the host cell. In vitro, shows high spermicidal activities. The protein is Dermaseptin-S4 of Phyllomedusa sauvagei (Sauvage's leaf frog).